The primary structure comprises 827 residues: Periplasmic nitrate reductase (827 aa).

The tat-type signal signal peptide spans 1 to 34 (MSLTRRDFIKANAVAATAAAAGIATPAIAQPAKA). One can recognise a 4Fe-4S Mo/W bis-MGD-type domain in the interval 36–92 (IRWDKGVCRFCGTGCAVLVGVQDGRVVATQGDPDSPVNRGLNCIKGYFLSKIMYGED). Positions 43, 46, 50, and 78 each coordinate [4Fe-4S] cluster. Mo-bis(molybdopterin guanine dinucleotide) contacts are provided by residues K80, Q148, N173, C177, 210 to 217 (WGSNMAEM), 241 to 245 (STFEH), 260 to 262 (QTD), M371, Q375, N481, 507 to 508 (SD), K530, D557, and 717 to 726 (TGRVLEHWHS). F793 lines the substrate pocket. 2 residues coordinate Mo-bis(molybdopterin guanine dinucleotide): N801 and K818.

This sequence belongs to the prokaryotic molybdopterin-containing oxidoreductase family. NasA/NapA/NarB subfamily. Component of the periplasmic nitrate reductase NapAB complex composed of NapA and NapB. [4Fe-4S] cluster is required as a cofactor. Requires Mo-bis(molybdopterin guanine dinucleotide) as cofactor. In terms of processing, predicted to be exported by the Tat system. The position of the signal peptide cleavage has not been experimentally proven.

The protein resides in the periplasm. It catalyses the reaction 2 Fe(II)-[cytochrome] + nitrate + 2 H(+) = 2 Fe(III)-[cytochrome] + nitrite + H2O. Catalytic subunit of the periplasmic nitrate reductase complex NapAB. Receives electrons from NapB and catalyzes the reduction of nitrate to nitrite. The chain is Periplasmic nitrate reductase from Paramagnetospirillum magneticum (strain ATCC 700264 / AMB-1) (Magnetospirillum magneticum).